Consider the following 288-residue polypeptide: Bifunctional protein FolD (288 aa).

Residues 165-167 and Ser-190 each bind NADP(+); that span reads GRS.

The protein belongs to the tetrahydrofolate dehydrogenase/cyclohydrolase family. In terms of assembly, homodimer.

It carries out the reaction (6R)-5,10-methylene-5,6,7,8-tetrahydrofolate + NADP(+) = (6R)-5,10-methenyltetrahydrofolate + NADPH. It catalyses the reaction (6R)-5,10-methenyltetrahydrofolate + H2O = (6R)-10-formyltetrahydrofolate + H(+). It functions in the pathway one-carbon metabolism; tetrahydrofolate interconversion. In terms of biological role, catalyzes the oxidation of 5,10-methylenetetrahydrofolate to 5,10-methenyltetrahydrofolate and then the hydrolysis of 5,10-methenyltetrahydrofolate to 10-formyltetrahydrofolate. This Bdellovibrio bacteriovorus (strain ATCC 15356 / DSM 50701 / NCIMB 9529 / HD100) protein is Bifunctional protein FolD.